Reading from the N-terminus, the 439-residue chain is Cobyrinate a,c-diamide synthase (439 aa).

Positions 214 to 235 are disordered; it reads ETARAPPEVATTERNTGDSPAD. Positions 237–428 constitute a GATase cobBQ-type domain; sequence RVAVAQDSAF…CHCHGESGAF (192 aa). The active-site Nucleophile is C317.

It belongs to the CobB/CbiA family. It depends on Mg(2+) as a cofactor.

The catalysed reaction is cob(II)yrinate + 2 L-glutamine + 2 ATP + 2 H2O = cob(II)yrinate a,c diamide + 2 L-glutamate + 2 ADP + 2 phosphate + 2 H(+). Its pathway is cofactor biosynthesis; adenosylcobalamin biosynthesis; cob(II)yrinate a,c-diamide from sirohydrochlorin (anaerobic route): step 10/10. Functionally, catalyzes the ATP-dependent amidation of the two carboxylate groups at positions a and c of cobyrinate, using either L-glutamine or ammonia as the nitrogen source. In Haloarcula marismortui (strain ATCC 43049 / DSM 3752 / JCM 8966 / VKM B-1809) (Halobacterium marismortui), this protein is Cobyrinate a,c-diamide synthase.